The sequence spans 566 residues: Nitrate/nitrite sensor protein NarQ (566 aa).

Residues 1-13 (MIVKRPVSASLAR) lie on the Cytoplasmic side of the membrane. A helical membrane pass occupies residues 14-34 (AFFYIVLLSILSTGIALLTLA). Residues 35–146 (SSLRDAEAIN…LALQHYAERK (112 aa)) lie on the Periplasmic side of the membrane. The chain crosses the membrane as a helical span at residues 147–167 (MLLVVAISLAGGIGIFTLVFF). Residues 168 to 566 (TLRRIRHQVV…SAEGEESQLM (399 aa)) lie on the Cytoplasmic side of the membrane. The region spanning 174-227 (HQVVAPLNQLVTASQRIEHGQFDSPPLDTNLPNELGLLAKTFNQMSSELHKLYR) is the HAMP domain. A Histidine kinase domain is found at 364 to 559 (TIARELHDSL…LVSISFRSAE (196 aa)). A Phosphohistidine; by autocatalysis modification is found at His-370.

It is found in the cell inner membrane. The catalysed reaction is ATP + protein L-histidine = ADP + protein N-phospho-L-histidine.. Its function is as follows. Acts as a sensor for nitrate/nitrite and transduces signal of nitrate/nitrite availability to the NarL/NarP proteins. NarQ probably activates NarL and NarP by phosphorylation. NarQ probably negatively regulates the NarL protein by dephosphorylation. This chain is Nitrate/nitrite sensor protein NarQ (narQ), found in Escherichia coli (strain K12).